Here is a 270-residue protein sequence, read N- to C-terminus: Formamidopyrimidine-DNA glycosylase (270 aa).

P2 acts as the Schiff-base intermediate with DNA in catalysis. E3 serves as the catalytic Proton donor. K58 (proton donor; for beta-elimination activity) is an active-site residue. 3 residues coordinate DNA: H91, R110, and R151. The segment at 236 to 270 adopts an FPG-type zinc-finger fold; the sequence is FVYGRGGQPCKVCGTALREVKLGQRASVYCPRCQR. R260 (proton donor; for delta-elimination activity) is an active-site residue.

The protein belongs to the FPG family. In terms of assembly, monomer. The cofactor is Zn(2+).

The enzyme catalyses Hydrolysis of DNA containing ring-opened 7-methylguanine residues, releasing 2,6-diamino-4-hydroxy-5-(N-methyl)formamidopyrimidine.. It catalyses the reaction 2'-deoxyribonucleotide-(2'-deoxyribose 5'-phosphate)-2'-deoxyribonucleotide-DNA = a 3'-end 2'-deoxyribonucleotide-(2,3-dehydro-2,3-deoxyribose 5'-phosphate)-DNA + a 5'-end 5'-phospho-2'-deoxyribonucleoside-DNA + H(+). Its function is as follows. Involved in base excision repair of DNA damaged by oxidation or by mutagenic agents. Acts as a DNA glycosylase that recognizes and removes damaged bases. Has a preference for oxidized purines, such as 7,8-dihydro-8-oxoguanine (8-oxoG). Has AP (apurinic/apyrimidinic) lyase activity and introduces nicks in the DNA strand. Cleaves the DNA backbone by beta-delta elimination to generate a single-strand break at the site of the removed base with both 3'- and 5'-phosphates. The sequence is that of Formamidopyrimidine-DNA glycosylase from Pseudomonas putida (strain GB-1).